Consider the following 599-residue polypeptide: Tryptophan 2-C-methyltransferase (599 aa).

The B12-binding domain maps to 4-149 (KGTVALINPN…RALAEGRSAD (146 aa)). Residues 167–197 (RVAPPALDPRAAPAPSSSPSPSPAPSSSSAP) are disordered. Positions 168–181 (VAPPALDPRAAPAP) are enriched in low complexity. The 254-residue stretch at 239–492 (YREGGLGSIL…IEYERQFMFD (254 aa)) folds into the Radical SAM core domain. [4Fe-4S] cluster contacts are provided by cysteine 253, cysteine 257, and cysteine 260.

The cofactor is [4Fe-4S] cluster. Cob(II)alamin is required as a cofactor.

It carries out the reaction L-tryptophan + S-adenosyl-L-methionine = 2-methyl-L-tryptophan + S-adenosyl-L-homocysteine + H(+). Its function is as follows. Involved in the biosynthetic pathway of the antibiotic thiostrepton A. First, TsrM catalyzes the transfer of a methyl group from S-adenosyl methionine (SAM) to cobalamin, leading to the formation of methylcobalamin (CH3-cobalamin) and S-adenosyl-L-homocysteine (SAH). Then the methyl group is transferred to the C2 position of tryptophan (Trp) with the concerted action of the radical SAM [4Fe-4S] center, leading to the production of methyltryptophan. In Streptomyces laurentii, this protein is Tryptophan 2-C-methyltransferase.